We begin with the raw amino-acid sequence, 426 residues long: Probable imidazolonepropionase (426 aa).

Residues tyrosine 158 and histidine 192 each coordinate 4-imidazolone-5-propanoate. Position 158 (tyrosine 158) interacts with N-formimidoyl-L-glutamate. Fe(3+) is bound at residue histidine 260. Residue histidine 260 participates in Zn(2+) binding. 4-imidazolone-5-propanoate is bound at residue glutamate 263. Aspartate 334 contacts Fe(3+). Aspartate 334 contacts Zn(2+). Asparagine 336 is an N-formimidoyl-L-glutamate binding site.

Belongs to the metallo-dependent hydrolases superfamily. HutI family. Zn(2+) is required as a cofactor. The cofactor is Fe(3+).

It carries out the reaction 4-imidazolone-5-propanoate + H2O = N-formimidoyl-L-glutamate. Its pathway is amino-acid degradation; L-histidine degradation into L-glutamate; N-formimidoyl-L-glutamate from L-histidine: step 3/3. This Dictyostelium discoideum (Social amoeba) protein is Probable imidazolonepropionase (amdhd1).